We begin with the raw amino-acid sequence, 412 residues long: Isocitrate dehydrogenase [NADP] (412 aa).

T100 provides a ligand contact to NADP(+). Residues S109, N111, R115, R125, and R149 each contribute to the D-threo-isocitrate site. Residue D301 coordinates Mg(2+). Residues 333-339 (HGSAPKY), N346, Y385, and R389 contribute to the NADP(+) site.

Belongs to the isocitrate and isopropylmalate dehydrogenases family. Homodimer. The cofactor is Mg(2+). Requires Mn(2+) as cofactor.

The catalysed reaction is D-threo-isocitrate + NADP(+) = 2-oxoglutarate + CO2 + NADPH. Its function is as follows. Catalyzes the oxidative decarboxylation of isocitrate to 2-oxoglutarate and carbon dioxide with the concomitant reduction of NADP(+). NAD(+) can replace NADP(+) with low efficiency. The polypeptide is Isocitrate dehydrogenase [NADP] (Archaeoglobus fulgidus (strain ATCC 49558 / DSM 4304 / JCM 9628 / NBRC 100126 / VC-16)).